The primary structure comprises 90 residues: Small ribosomal subunit protein uS15c (90 aa).

This sequence belongs to the universal ribosomal protein uS15 family. Part of the 30S ribosomal subunit.

Its subcellular location is the plastid. The protein localises to the chloroplast. The protein is Small ribosomal subunit protein uS15c (rps15-A) of Pelargonium hortorum (Common geranium).